A 447-amino-acid polypeptide reads, in one-letter code: Argininosuccinate synthase (447 aa).

Residues 17–25 (AFSGGLDTS) and alanine 43 contribute to the ATP site. Tyrosine 99 lines the L-citrulline pocket. ATP-binding residues include glycine 129 and threonine 131. L-aspartate is bound by residues threonine 131, asparagine 135, and aspartate 136. Asparagine 135 contributes to the L-citrulline binding site. Aspartate 136 serves as a coordination point for ATP. The L-citrulline site is built by arginine 139 and serine 192. An ATP-binding site is contributed by aspartate 194. Residues threonine 201, glutamate 203, and glutamate 280 each coordinate L-citrulline.

Belongs to the argininosuccinate synthase family. Type 2 subfamily. As to quaternary structure, homotetramer.

It is found in the cytoplasm. The enzyme catalyses L-citrulline + L-aspartate + ATP = 2-(N(omega)-L-arginino)succinate + AMP + diphosphate + H(+). It participates in amino-acid biosynthesis; L-arginine biosynthesis; L-arginine from L-ornithine and carbamoyl phosphate: step 2/3. This Escherichia coli (strain K12 / MC4100 / BW2952) protein is Argininosuccinate synthase.